Consider the following 101-residue polypeptide: Small ribosomal subunit protein bS18c (101 aa).

Positions 1–19 (MDKSKQPFRKSKRSFRRRL) are enriched in basic residues. The disordered stretch occupies residues 1 to 24 (MDKSKQPFRKSKRSFRRRLPPIGS).

The protein belongs to the bacterial ribosomal protein bS18 family. In terms of assembly, part of the 30S ribosomal subunit.

Its subcellular location is the plastid. It is found in the chloroplast. This chain is Small ribosomal subunit protein bS18c, found in Amborella trichopoda.